The chain runs to 153 residues: MENYCKIVAQNRKAKFNYFIQDKMEAGIVLQGSELKSIRSGKVSIEDSYAAESSNEIFLYNSYIGEYKQANRFNHVPRRVRKLLLHRKEIQKIIGKLSVQGCTLVALSIYFNSKNKVKVELGLAKGKKQYDKRYAIKEQEWKKQQARIMRNKF.

Belongs to the SmpB family.

It localises to the cytoplasm. Its function is as follows. Required for rescue of stalled ribosomes mediated by trans-translation. Binds to transfer-messenger RNA (tmRNA), required for stable association of tmRNA with ribosomes. tmRNA and SmpB together mimic tRNA shape, replacing the anticodon stem-loop with SmpB. tmRNA is encoded by the ssrA gene; the 2 termini fold to resemble tRNA(Ala) and it encodes a 'tag peptide', a short internal open reading frame. During trans-translation Ala-aminoacylated tmRNA acts like a tRNA, entering the A-site of stalled ribosomes, displacing the stalled mRNA. The ribosome then switches to translate the ORF on the tmRNA; the nascent peptide is terminated with the 'tag peptide' encoded by the tmRNA and targeted for degradation. The ribosome is freed to recommence translation, which seems to be the essential function of trans-translation. This Orientia tsutsugamushi (strain Boryong) (Rickettsia tsutsugamushi) protein is SsrA-binding protein.